Reading from the N-terminus, the 452-residue chain is C4-dicarboxylate transport protein 1 (452 aa).

9 helical membrane passes run Phe18 to Gly38, Leu51 to Met71, Leu83 to Val103, Ala151 to Leu171, Val191 to Met211, Leu229 to Ala249, Gly304 to Ala324, Ile337 to Gly357, and Ile359 to Ile379. Positions Trp426–Gly452 are disordered. A compositionally biased stretch (basic and acidic residues) spans Glu431–His442.

The protein belongs to the dicarboxylate/amino acid:cation symporter (DAACS) (TC 2.A.23) family.

Its subcellular location is the cell inner membrane. Responsible for the transport of dicarboxylates such as succinate, fumarate, and malate from the periplasm across the membrane. The protein is C4-dicarboxylate transport protein 1 of Polaromonas naphthalenivorans (strain CJ2).